Reading from the N-terminus, the 386-residue chain is Sulfate adenylyltransferase (386 aa).

Belongs to the sulfate adenylyltransferase family.

It carries out the reaction sulfate + ATP + H(+) = adenosine 5'-phosphosulfate + diphosphate. It participates in sulfur metabolism; hydrogen sulfide biosynthesis; sulfite from sulfate: step 1/3. In Persephonella marina (strain DSM 14350 / EX-H1), this protein is Sulfate adenylyltransferase.